A 1411-amino-acid polypeptide reads, in one-letter code: DNA-directed RNA polymerase subunit beta' (1411 aa).

4 residues coordinate Zn(2+): C70, C72, C85, and C88. Mg(2+) is bound by residues D460, D462, and D464. The Zn(2+) site is built by C814, C888, C895, and C898.

The protein belongs to the RNA polymerase beta' chain family. The RNAP catalytic core consists of 2 alpha, 1 beta, 1 beta' and 1 omega subunit. When a sigma factor is associated with the core the holoenzyme is formed, which can initiate transcription. Mg(2+) is required as a cofactor. It depends on Zn(2+) as a cofactor.

The catalysed reaction is RNA(n) + a ribonucleoside 5'-triphosphate = RNA(n+1) + diphosphate. Functionally, DNA-dependent RNA polymerase catalyzes the transcription of DNA into RNA using the four ribonucleoside triphosphates as substrates. This is DNA-directed RNA polymerase subunit beta' from Idiomarina loihiensis (strain ATCC BAA-735 / DSM 15497 / L2-TR).